The sequence spans 824 residues: Leucine--tRNA ligase (824 aa).

A 'HIGH' region motif is present at residues 41–51 (PYPSGTLHVGH). The short motif at 580-584 (KMSKS) is the 'KMSKS' region element. Lys-583 serves as a coordination point for ATP.

This sequence belongs to the class-I aminoacyl-tRNA synthetase family.

Its subcellular location is the cytoplasm. The enzyme catalyses tRNA(Leu) + L-leucine + ATP = L-leucyl-tRNA(Leu) + AMP + diphosphate. This Thermotoga maritima (strain ATCC 43589 / DSM 3109 / JCM 10099 / NBRC 100826 / MSB8) protein is Leucine--tRNA ligase.